Reading from the N-terminus, the 219-residue chain is tRNA (guanine-N(7)-)-methyltransferase (219 aa).

4 residues coordinate S-adenosyl-L-methionine: Glu-43, Asp-68, Glu-101, and Asn-124. Substrate-binding residues include Lys-128 and Asp-160.

Belongs to the class I-like SAM-binding methyltransferase superfamily. TrmB family.

The catalysed reaction is guanosine(46) in tRNA + S-adenosyl-L-methionine = N(7)-methylguanosine(46) in tRNA + S-adenosyl-L-homocysteine. Its pathway is tRNA modification; N(7)-methylguanine-tRNA biosynthesis. Its function is as follows. Catalyzes the formation of N(7)-methylguanine at position 46 (m7G46) in tRNA. In Clostridium botulinum (strain Alaska E43 / Type E3), this protein is tRNA (guanine-N(7)-)-methyltransferase.